Here is a 310-residue protein sequence, read N- to C-terminus: Ribosomal RNA small subunit methyltransferase H (310 aa).

Residues 33-35, Asp53, Phe79, Asp100, and Gln107 each bind S-adenosyl-L-methionine; that span reads AGH.

It belongs to the methyltransferase superfamily. RsmH family.

The protein localises to the cytoplasm. It carries out the reaction cytidine(1402) in 16S rRNA + S-adenosyl-L-methionine = N(4)-methylcytidine(1402) in 16S rRNA + S-adenosyl-L-homocysteine + H(+). In terms of biological role, specifically methylates the N4 position of cytidine in position 1402 (C1402) of 16S rRNA. The chain is Ribosomal RNA small subunit methyltransferase H from Clostridium beijerinckii (strain ATCC 51743 / NCIMB 8052) (Clostridium acetobutylicum).